The chain runs to 62 residues: Small ribosomal subunit protein uS14 (62 aa).

4 residues coordinate Zn(2+): C25, C28, C41, and C44.

The protein belongs to the universal ribosomal protein uS14 family. Zinc-binding uS14 subfamily. In terms of assembly, part of the 30S ribosomal subunit. Contacts proteins S3 and S10. Zn(2+) serves as cofactor.

Binds 16S rRNA, required for the assembly of 30S particles and may also be responsible for determining the conformation of the 16S rRNA at the A site. This chain is Small ribosomal subunit protein uS14, found in Persephonella marina (strain DSM 14350 / EX-H1).